Here is a 361-residue protein sequence, read N- to C-terminus: Chorismate synthase (361 aa).

Residues arginine 48 and arginine 54 each contribute to the NADP(+) site. FMN is bound by residues 125-127, 238-239, glycine 278, 293-297, and arginine 319; these read RSS, NA, and KPTSS.

It belongs to the chorismate synthase family. Homotetramer. It depends on FMNH2 as a cofactor.

The catalysed reaction is 5-O-(1-carboxyvinyl)-3-phosphoshikimate = chorismate + phosphate. Its pathway is metabolic intermediate biosynthesis; chorismate biosynthesis; chorismate from D-erythrose 4-phosphate and phosphoenolpyruvate: step 7/7. Functionally, catalyzes the anti-1,4-elimination of the C-3 phosphate and the C-6 proR hydrogen from 5-enolpyruvylshikimate-3-phosphate (EPSP) to yield chorismate, which is the branch point compound that serves as the starting substrate for the three terminal pathways of aromatic amino acid biosynthesis. This reaction introduces a second double bond into the aromatic ring system. The protein is Chorismate synthase of Shigella flexneri serotype 5b (strain 8401).